Reading from the N-terminus, the 110-residue chain is uncharacterized protein (110 aa).

Positions 1 to 16 (MSVKLKYDKIDQRNGD) are enriched in basic and acidic residues. Disordered stretches follow at residues 1–29 (MSVK…GNGN) and 73–100 (IKQQ…ESPN). A compositionally biased stretch (low complexity) spans 20–29 (GNHNNCGNGN).

This is an uncharacterized protein from Dictyostelium discoideum (Social amoeba).